Consider the following 197-residue polypeptide: Small ribosomal subunit protein uS4c (197 aa).

The S4 RNA-binding domain occupies 85–161; the sequence is MRLDNILFRL…TGKELANHLN (77 aa).

It belongs to the universal ribosomal protein uS4 family. Part of the 30S ribosomal subunit. Contacts protein S5. The interaction surface between S4 and S5 is involved in control of translational fidelity.

The protein resides in the plastid. In terms of biological role, one of the primary rRNA binding proteins, it binds directly to 16S rRNA where it nucleates assembly of the body of the 30S subunit. Its function is as follows. With S5 and S12 plays an important role in translational accuracy. In Cuscuta obtusiflora (Peruvian dodder), this protein is Small ribosomal subunit protein uS4c (rps4).